Reading from the N-terminus, the 102-residue chain is Large ribosomal subunit protein bL21 (102 aa).

Belongs to the bacterial ribosomal protein bL21 family. As to quaternary structure, part of the 50S ribosomal subunit. Contacts protein L20.

Its function is as follows. This protein binds to 23S rRNA in the presence of protein L20. This Enterococcus faecalis (strain ATCC 700802 / V583) protein is Large ribosomal subunit protein bL21.